Consider the following 176-residue polypeptide: Protein KleF (176 aa).

The protein is Protein KleF (kleF) of Escherichia coli.